The primary structure comprises 229 residues: Orotidine 5'-phosphate decarboxylase (229 aa).

Substrate contacts are provided by residues D10, K32, 59-68 (DLKFHDIPNT), T119, R180, Q189, G209, and R210. The active-site Proton donor is K61.

Belongs to the OMP decarboxylase family. Type 1 subfamily. Homodimer.

The catalysed reaction is orotidine 5'-phosphate + H(+) = UMP + CO2. It participates in pyrimidine metabolism; UMP biosynthesis via de novo pathway; UMP from orotate: step 2/2. Functionally, catalyzes the decarboxylation of orotidine 5'-monophosphate (OMP) to uridine 5'-monophosphate (UMP). The chain is Orotidine 5'-phosphate decarboxylase from Legionella pneumophila subsp. pneumophila (strain Philadelphia 1 / ATCC 33152 / DSM 7513).